The chain runs to 524 residues: Lysine--tRNA ligase (524 aa).

2 residues coordinate Mg(2+): Glu431 and Glu438.

This sequence belongs to the class-II aminoacyl-tRNA synthetase family. Homodimer. The cofactor is Mg(2+).

Its subcellular location is the cytoplasm. It carries out the reaction tRNA(Lys) + L-lysine + ATP = L-lysyl-tRNA(Lys) + AMP + diphosphate. The protein is Lysine--tRNA ligase (lysS) of Chlamydia muridarum (strain MoPn / Nigg).